The primary structure comprises 895 residues: Microsomal triglyceride transfer protein large subunit (895 aa).

Positions 1-18 (MILLAVLFLCFFSSYSAS) are cleaved as a signal peptide. In terms of domain architecture, Vitellogenin spans 28–659 (LNNERLYKLT…VFQYLGKAGL (632 aa)). C174 and C194 are disulfide-bonded.

In terms of assembly, heterodimer; heterodimerizes with the protein disulfide isomerase (P4HB/PDI). Interacts with APOB. Interacts with PRAP1.

The protein resides in the endoplasmic reticulum. Its subcellular location is the golgi apparatus. The enzyme catalyses a 1,2-diacyl-sn-glycero-3-phosphocholine(in) = a 1,2-diacyl-sn-glycero-3-phosphocholine(out). The catalysed reaction is a 1,2-diacyl-sn-glycero-3-phosphoethanolamine(in) = a 1,2-diacyl-sn-glycero-3-phosphoethanolamine(out). It carries out the reaction a cholesterol ester(in) = a cholesterol ester(out). It catalyses the reaction a triacyl-sn-glycerol(in) = a triacyl-sn-glycerol(out). Functionally, catalyzes the transport of triglyceride, cholesteryl ester, and phospholipid between phospholipid surfaces. Required for the assembly and secretion of plasma lipoproteins that contain apolipoprotein B. May be involved in regulating cholesteryl ester biosynthesis in cells that produce lipoproteins. In Mesocricetus auratus (Golden hamster), this protein is Microsomal triglyceride transfer protein large subunit (MTTP).